A 417-amino-acid chain; its full sequence is MKAISVLGSTGSIGTQTLQIVDDFPDQFRVVALTAGRNLALLVEQIQRHQPELVALADEALLPELKQRLEALDPSDRPAQCPEMVGGPDGLEVAASWGSAELVVTGIVGCAGLLPTLAAVRAGKDLALANKETLIAAGPVVLPELKKSGSRLLPADSEHSAIFQCLQGTPWADTARLSTGVPTPGLRRIQLTASGGAFRDWNAADLEKATVADATSHPNWSMGRKITVDSASLMNKGLEVIEAHYLFGLDYDHIEIVIHPQSIIHSMVEMADSSVLAQLGWPDMKLPILYCLSWPSRLETPWRRLDLTEVGQLSFRAPDPNKYPCMELAYAAGRAGGTMPAVMNAANEEAVAQFLEERIHFLDIPEVIEAACERHKPDLMAHPQLDDVLEVDQWARTAVREQVSRGTTRIPGPAVAA.

NADPH is bound by residues Thr-10, Gly-11, Ser-12, Ile-13, Gly-36, Arg-37, Asn-38, and Asn-130. Lys-131 contributes to the 1-deoxy-D-xylulose 5-phosphate binding site. Glu-132 serves as a coordination point for NADPH. Position 156 (Asp-156) interacts with Mn(2+). 1-deoxy-D-xylulose 5-phosphate is bound by residues Ser-157, Glu-158, Ser-194, and His-217. Mn(2+) is bound at residue Glu-158. Gly-223 serves as a coordination point for NADPH. 4 residues coordinate 1-deoxy-D-xylulose 5-phosphate: Ser-230, Asn-235, Lys-236, and Glu-239. Glu-239 is a Mn(2+) binding site.

Belongs to the DXR family. The cofactor is Mg(2+). Mn(2+) is required as a cofactor.

The catalysed reaction is 2-C-methyl-D-erythritol 4-phosphate + NADP(+) = 1-deoxy-D-xylulose 5-phosphate + NADPH + H(+). It participates in isoprenoid biosynthesis; isopentenyl diphosphate biosynthesis via DXP pathway; isopentenyl diphosphate from 1-deoxy-D-xylulose 5-phosphate: step 1/6. In terms of biological role, catalyzes the NADPH-dependent rearrangement and reduction of 1-deoxy-D-xylulose-5-phosphate (DXP) to 2-C-methyl-D-erythritol 4-phosphate (MEP). This is 1-deoxy-D-xylulose 5-phosphate reductoisomerase from Synechococcus sp. (strain CC9902).